The chain runs to 396 residues: Elongation factor Tu (396 aa).

One can recognise a tr-type G domain in the interval lysine 10 to glutamate 205. The tract at residues glycine 19 to threonine 26 is G1. Glycine 19–threonine 26 contacts GTP. Threonine 26 contacts Mg(2+). Residues glycine 61–alanine 65 are G2. The interval aspartate 82 to glycine 85 is G3. GTP is bound by residues aspartate 82 to histidine 86 and asparagine 137 to aspartate 140. Residues asparagine 137 to aspartate 140 form a G4 region. Residues serine 175–leucine 177 form a G5 region.

This sequence belongs to the TRAFAC class translation factor GTPase superfamily. Classic translation factor GTPase family. EF-Tu/EF-1A subfamily. As to quaternary structure, monomer.

It is found in the cytoplasm. It catalyses the reaction GTP + H2O = GDP + phosphate + H(+). In terms of biological role, GTP hydrolase that promotes the GTP-dependent binding of aminoacyl-tRNA to the A-site of ribosomes during protein biosynthesis. The sequence is that of Elongation factor Tu from Salinibacter ruber (strain DSM 13855 / M31).